A 502-amino-acid chain; its full sequence is Lysine--tRNA ligase (502 aa).

Residues Glu-398 and Glu-405 each coordinate Mg(2+).

The protein belongs to the class-II aminoacyl-tRNA synthetase family. As to quaternary structure, homodimer. It depends on Mg(2+) as a cofactor.

It is found in the cytoplasm. It carries out the reaction tRNA(Lys) + L-lysine + ATP = L-lysyl-tRNA(Lys) + AMP + diphosphate. The polypeptide is Lysine--tRNA ligase (lysS) (Thermotoga maritima (strain ATCC 43589 / DSM 3109 / JCM 10099 / NBRC 100826 / MSB8)).